Reading from the N-terminus, the 406-residue chain is Cysteine desulfurase (406 aa).

Residue Lys226 is modified to N6-(pyridoxal phosphate)lysine. Cys364 acts as the Cysteine persulfide intermediate in catalysis.

It belongs to the class-V pyridoxal-phosphate-dependent aminotransferase family. Csd subfamily. Homodimer. Interacts with SufE and the SufBCD complex composed of SufB, SufC and SufD. The interaction with SufE is required to mediate the direct transfer of the sulfur atom from the S-sulfanylcysteine. Pyridoxal 5'-phosphate serves as cofactor.

It is found in the cytoplasm. The catalysed reaction is (sulfur carrier)-H + L-cysteine = (sulfur carrier)-SH + L-alanine. It carries out the reaction L-selenocysteine + AH2 = hydrogenselenide + L-alanine + A + H(+). The protein operates within cofactor biosynthesis; iron-sulfur cluster biosynthesis. Functionally, cysteine desulfurases mobilize the sulfur from L-cysteine to yield L-alanine, an essential step in sulfur metabolism for biosynthesis of a variety of sulfur-containing biomolecules. Component of the suf operon, which is activated and required under specific conditions such as oxidative stress and iron limitation. Acts as a potent selenocysteine lyase in vitro, that mobilizes selenium from L-selenocysteine. Selenocysteine lyase activity is however unsure in vivo. This is Cysteine desulfurase from Escherichia coli O9:H4 (strain HS).